The chain runs to 434 residues: Adenylosuccinate synthetase (434 aa).

GTP contacts are provided by residues 22-28 and 50-52; these read GDEGKGK and GHT. The Proton acceptor role is filled by D23. 2 residues coordinate Mg(2+): D23 and G50. Residues 23-26, 48-51, T139, R153, Q234, T249, and R313 each bind IMP; these read DEGK and NAGH. H51 (proton donor) is an active-site residue. Residue 309-315 participates in substrate binding; the sequence is ATTGRKR. GTP is bound by residues R315, 341–343, and 423–425; these read KLD and SVG.

This sequence belongs to the adenylosuccinate synthetase family. As to quaternary structure, homodimer. It depends on Mg(2+) as a cofactor.

Its subcellular location is the cytoplasm. It carries out the reaction IMP + L-aspartate + GTP = N(6)-(1,2-dicarboxyethyl)-AMP + GDP + phosphate + 2 H(+). It functions in the pathway purine metabolism; AMP biosynthesis via de novo pathway; AMP from IMP: step 1/2. Its function is as follows. Plays an important role in the de novo pathway of purine nucleotide biosynthesis. Catalyzes the first committed step in the biosynthesis of AMP from IMP. This Chlorobium phaeovibrioides (strain DSM 265 / 1930) (Prosthecochloris vibrioformis (strain DSM 265)) protein is Adenylosuccinate synthetase.